A 147-amino-acid polypeptide reads, in one-letter code: Small ribosomal subunit protein uS12 (147 aa).

This sequence belongs to the universal ribosomal protein uS12 family. In terms of assembly, part of the 30S ribosomal subunit.

Functionally, with S4 and S5 plays an important role in translational accuracy. Located at the interface of the 30S and 50S subunits. This is Small ribosomal subunit protein uS12 from Thermococcus kodakarensis (strain ATCC BAA-918 / JCM 12380 / KOD1) (Pyrococcus kodakaraensis (strain KOD1)).